A 49-amino-acid chain; its full sequence is Large ribosomal subunit protein bL33B (49 aa).

Belongs to the bacterial ribosomal protein bL33 family.

This chain is Large ribosomal subunit protein bL33B, found in Bacillus pumilus (strain SAFR-032).